The chain runs to 306 residues: tRNA pseudouridine synthase B (306 aa).

D47 functions as the Nucleophile in the catalytic mechanism.

Belongs to the pseudouridine synthase TruB family. Type 1 subfamily.

The enzyme catalyses uridine(55) in tRNA = pseudouridine(55) in tRNA. Responsible for synthesis of pseudouridine from uracil-55 in the psi GC loop of transfer RNAs. The chain is tRNA pseudouridine synthase B from Neisseria gonorrhoeae (strain ATCC 700825 / FA 1090).